An 88-amino-acid chain; its full sequence is U18-hexatoxin-Hi1a (88 aa).

The first 17 residues, 1–17 (MRIYSLLILSFLLLASA), serve as a signal peptide directing secretion. Positions 18-47 (VLINSAEMPRSEKSLLYSIMQGREDSEEGR) are excised as a propeptide. 4 cysteine pairs are disulfide-bonded: cysteine 48–cysteine 63, cysteine 55–cysteine 69, cysteine 62–cysteine 81, and cysteine 71–cysteine 79.

It belongs to the neurotoxin 07 (Beta/delta-agtx) family. 02 (aga-3) subfamily. As to expression, expressed by the venom gland.

It is found in the secreted. Functionally, weak insecticidal toxin with probable ion channel impairing activity. In vivo, induces paralysis when injected into sheep blowflies (L.cuprina). Shows weak toxicity, since it is only toxic at high doses, and flies recover within 24 hours. In Hadronyche infensa (Fraser island funnel-web spider), this protein is U18-hexatoxin-Hi1a.